Here is a 248-residue protein sequence, read N- to C-terminus: Small ribosomal subunit protein uS2 (248 aa).

The protein belongs to the universal ribosomal protein uS2 family.

The protein is Small ribosomal subunit protein uS2 of Thiobacillus denitrificans (strain ATCC 25259 / T1).